We begin with the raw amino-acid sequence, 315 residues long: Acetaldehyde dehydrogenase 2 (315 aa).

An NAD(+)-binding site is contributed by Ser-13 to Ile-16. The active-site Acyl-thioester intermediate is Cys-131. NAD(+) contacts are provided by residues Ser-162 to Asn-170 and Asn-290.

This sequence belongs to the acetaldehyde dehydrogenase family.

The catalysed reaction is acetaldehyde + NAD(+) + CoA = acetyl-CoA + NADH + H(+). This chain is Acetaldehyde dehydrogenase 2, found in Pseudomonas putida (strain W619).